The chain runs to 204 residues: Transcriptional regulator GfcR (204 aa).

It belongs to the purine/pyrimidine phosphoribosyltransferase family. GfcR subfamily.

In Methanoculleus marisnigri (strain ATCC 35101 / DSM 1498 / JR1), this protein is Transcriptional regulator GfcR.